The sequence spans 182 residues: Histone deacetylase complex subunit SAP30L (182 aa).

Residue Met1 is modified to N-acetylmethionine. A compositionally biased stretch (acidic residues) spans 1–10; that stretch reads MNGFSTEEDS. The interval 1–22 is disordered; sequence MNGFSTEEDSREGPPAAPAAAP. Disulfide bonds link Cys28/Cys29 and Cys37/Cys73. An Atypical zinc finger spans residues 28-76; sequence CCLIADGERCVRPAGNASFSKRVQKSISQKKLKLDIDKSVRHLYICDFH. Residue Lys48 forms a Glycyl lysine isopeptide (Lys-Gly) (interchain with G-Cter in SUMO2) linkage. The tract at residues 84 to 103 is disordered; it reads RNKRKRKASDDGGDSPEHDA. The short motif at 85-90 is the Nuclear localization signal (NLS) element; sequence NKRKRK. Positions 87 to 89 are important for DNA and phosphoinositide binding; sequence RKR. Residues Ser92 and Ser98 each carry the phosphoserine modification. Residues Lys154, Lys165, and Lys174 each participate in a glycyl lysine isopeptide (Lys-Gly) (interchain with G-Cter in SUMO2) cross-link.

This sequence belongs to the SAP30 family. As to quaternary structure, interacts with components of the histone deacetylase complex SIN3A, HDAC1 and HDAC2. Binds histones and nucleosomes. Interacts with FEZ1.

The protein localises to the nucleus. It localises to the nucleolus. In terms of biological role, functions as a transcription repressor, probably via its interaction with histone deacetylase complexes. Involved in the functional recruitment of the class 1 Sin3-histone deacetylase complex (HDAC) to the nucleolus. Binds DNA, apparently without sequence-specificity, and bends bound double-stranded DNA. Binds phosphoinositol phosphates (phosphoinositol 3-phosphate, phosphoinositol 4-phosphate and phosphoinositol 5-phosphate) via the same basic sequence motif that mediates DNA binding and nuclear import. The chain is Histone deacetylase complex subunit SAP30L (Sap30l) from Mus musculus (Mouse).